We begin with the raw amino-acid sequence, 242 residues long: MSTDKKFIYRRILLKISGEVLQGVNKFGIDINSLKRIAKEIEFIVKIGVQVGLVIGSGNLFRGAKLSKLGLNRVASDHIGILSTVINSLAMRDTINSISSIKTCLMSAIPLNGICEIYNYEKAMNLLSNHVVVIFSAGTGNPFFTTDSAACLRGIETESDIILKGTKVDGVYSKDPNKDSHAFLYRRLTYKDVLKKELKIMDLAAFTLARDYHMPIRVFNIHTPGSLYRIIMGDDEGTLITR.

Residues 15 to 18 (KISG), G58, and R62 contribute to the ATP site. UMP-binding positions include D77 and 139–146 (TGNPFFTT). ATP-binding residues include T166, Y172, and D175.

This sequence belongs to the UMP kinase family. As to quaternary structure, homohexamer.

It is found in the cytoplasm. The enzyme catalyses UMP + ATP = UDP + ADP. It functions in the pathway pyrimidine metabolism; CTP biosynthesis via de novo pathway; UDP from UMP (UMPK route): step 1/1. Its activity is regulated as follows. Inhibited by UTP. Functionally, catalyzes the reversible phosphorylation of UMP to UDP. The sequence is that of Uridylate kinase from Buchnera aphidicola subsp. Acyrthosiphon pisum (strain APS) (Acyrthosiphon pisum symbiotic bacterium).